A 143-amino-acid chain; its full sequence is Transcriptional regulator MraZ (143 aa).

SpoVT-AbrB domains follow at residues 5 to 47 (EYKH…SLKE) and 76 to 119 (ACEC…SEEN).

This sequence belongs to the MraZ family. In terms of assembly, forms oligomers.

The protein resides in the cytoplasm. The protein localises to the nucleoid. In Caldicellulosiruptor saccharolyticus (strain ATCC 43494 / DSM 8903 / Tp8T 6331), this protein is Transcriptional regulator MraZ.